A 773-amino-acid polypeptide reads, in one-letter code: Elongin-A (773 aa).

Residues 4–79 (ESALQVVEKL…AQWKKLVPVE (76 aa)) form the TFIIS N-terminal domain. Residues 79 to 93 (ERNNEAEDQDFEKSN) show a composition bias toward basic and acidic residues. Residues 79–480 (ERNNEAEDQD…PRKVPTDVLP (402 aa)) form a disordered region. The segment covering 112 to 124 (YQESWQASGSQPY) has biased composition (polar residues). A compositionally biased stretch (basic and acidic residues) spans 136–156 (LPELERPHKVAHGHERRDERK). The span at 162–174 (SPPYSSDPESSDY) shows a compositional bias: low complexity. At Ser-195 the chain carries Phosphoserine. Positions 239–248 (KPHKSSHKEK) are enriched in basic residues. Composition is skewed to basic and acidic residues over residues 249-265 (RPVD…MGRE) and 271-304 (SSKE…EGNS). At Ser-310 the chain carries Phosphoserine. Composition is skewed to basic and acidic residues over residues 317–339 (SDNH…KNKQ) and 368–380 (QEGK…DRKS). Ser-380 and Ser-383 each carry phosphoserine. Position 430 is an N6-acetyllysine (Lys-430). Ser-515 carries the post-translational modification Phosphoserine. Residues 521–680 (EAGFTGRRMN…PPRDVRRRQE (160 aa)) form an activation domain region. The BC-box stretch occupies residues 549 to 558 (TLHQQCIRVL). In terms of domain architecture, F-box spans 565–609 (IFEVGGVPYSVLEPVLERCTPDQLYRIEECNHVLIEETDQLWKVH). The interval 671 to 747 (PPRDVRRRQE…VASSSVSYDP (77 aa)) is disordered. Positions 704–718 (SSHVPASNSSSSFHS) are enriched in low complexity. Residues 728-744 (PSTSSAHLAPVASSSVS) are compositionally biased toward polar residues.

As to quaternary structure, heterotrimer of an A (ELOA, ELOA2 or ELOA3P), ELOB and ELOC subunit. Part of a multisubunit ubiquitin ligase complex consisting of elongin BC complex (ELOB and ELOC), elongin A/ELOA, RBX1 and CUL5. Interacts with ERCC6; the interaction is induced by DNA damaging agents or inhibitors of RNA polymerase II elongation. Interacts (via BC-box) with CUL5.

The protein localises to the nucleus. Functionally, SIII, also known as elongin, is a general transcription elongation factor that increases the RNA polymerase II transcription elongation past template-encoded arresting sites. Subunit A is transcriptionally active and its transcription activity is strongly enhanced by binding to the dimeric complex of the SIII regulatory subunits B and C (elongin BC complex). As part of a multisubunit complex composed of elongin BC complex (ELOB and ELOC), elongin A/ELOA, RBX1 and CUL5; polyubiquitinates monoubiquitinated POLR2A. The polypeptide is Elongin-A (Eloa) (Rattus norvegicus (Rat)).